We begin with the raw amino-acid sequence, 220 residues long: Uracil-DNA glycosylase (220 aa).

Asp61 functions as the Proton acceptor in the catalytic mechanism.

This sequence belongs to the uracil-DNA glycosylase (UDG) superfamily. UNG family.

It localises to the cytoplasm. The catalysed reaction is Hydrolyzes single-stranded DNA or mismatched double-stranded DNA and polynucleotides, releasing free uracil.. In terms of biological role, excises uracil residues from the DNA which can arise as a result of misincorporation of dUMP residues by DNA polymerase or due to deamination of cytosine. This Glaesserella parasuis serovar 5 (strain SH0165) (Haemophilus parasuis) protein is Uracil-DNA glycosylase.